Here is a 236-residue protein sequence, read N- to C-terminus: 4-aminobenzoate synthase (236 aa).

Positions 87, 94, 148, 180, 184, and 187 each coordinate Fe(2+).

This sequence belongs to the CADD family. Homodimer. Fe(2+) is required as a cofactor. The cofactor is Mn(2+).

In terms of biological role, involved in de novo para-aminobenzoate (PABA) biosynthesis. Acts as a self-sacrificing or 'suicide' enzyme that utilizes its own active site tyrosine residue(s) as the substrate for PABA synthesis. The side chain of the tyrosine residue is released from the protein backbone via cleavage of the C(alpha)-C(beta) bond, leaving a glycine in place of the original tyrosine residue. Reaction requires O(2) and a reduced dimetal cofactor. The protein is 4-aminobenzoate synthase of Chlamydia muridarum (strain MoPn / Nigg).